We begin with the raw amino-acid sequence, 205 residues long: Tumor suppressor candidate gene 1 protein homolog (205 aa).

The segment covering 1–12 (MWRMRGGATRRG) has biased composition (low complexity). The segment at 1 to 49 (MWRMRGGATRRGSCGGEGGGSRGESGRLGRAREGGGGGGGVGWRGRAGG) is disordered. A compositionally biased stretch (gly residues) spans 13-23 (SCGGEGGGSRG). The span at 24–33 (ESGRLGRARE) shows a compositional bias: basic and acidic residues. Residues 34-48 (GGGGGGGVGWRGRAG) are compositionally biased toward gly residues. Positions 66 to 110 (LEALRARDERDRQNARLREENARLRLENRRLRRENRSLFRQALRL) form a coiled coil. 2 disordered regions span residues 113-149 (DSGEREAAVETLAPDEPATNRKARGHGREEEPGSPRA) and 174-205 (GARPPGAIEEPPLQETATGLCAHDPDVPRPWL). A Phosphoserine modification is found at Ser-146. Positions 196-205 (HDPDVPRPWL) are enriched in basic and acidic residues.

The sequence is that of Tumor suppressor candidate gene 1 protein homolog (Tusc1) from Mus musculus (Mouse).